A 133-amino-acid chain; its full sequence is Small ribosomal subunit protein uS11 (133 aa).

The protein belongs to the universal ribosomal protein uS11 family. Part of the 30S ribosomal subunit. Interacts with proteins S7 and S18. Binds to IF-3.

Located on the platform of the 30S subunit, it bridges several disparate RNA helices of the 16S rRNA. Forms part of the Shine-Dalgarno cleft in the 70S ribosome. This is Small ribosomal subunit protein uS11 from Shouchella clausii (strain KSM-K16) (Alkalihalobacillus clausii).